Reading from the N-terminus, the 440-residue chain is Probable carboxypeptidase AFUB_072730 (440 aa).

The N-terminal stretch at 1 to 16 is a signal peptide; that stretch reads MKPLTSLLLSAALSAA. 2 N-linked (GlcNAc...) asparagine glycosylation sites follow: N87 and N149. D165 provides a ligand contact to Zn(2+). E197 acts as the Proton acceptor in catalysis. Position 198 (E198) interacts with Zn(2+). N353 and N372 each carry an N-linked (GlcNAc...) asparagine glycan.

This sequence belongs to the peptidase M20A family. Requires Zn(2+) as cofactor.

It is found in the secreted. The protein is Probable carboxypeptidase AFUB_072730 of Aspergillus fumigatus (strain CBS 144.89 / FGSC A1163 / CEA10) (Neosartorya fumigata).